A 155-amino-acid polypeptide reads, in one-letter code: Ribosome maturation factor RimP (155 aa).

The protein belongs to the RimP family.

It localises to the cytoplasm. Required for maturation of 30S ribosomal subunits. The sequence is that of Ribosome maturation factor RimP from Listeria monocytogenes serotype 4b (strain CLIP80459).